The sequence spans 2835 residues: Vanchrobactin synthetase VabF (2835 aa).

The condensation 1 stretch occupies residues 16-452 (EDQWPLIGTQ…IPPSEKQQIT (437 aa)). The adenylation 1 stretch occupies residues 473-880 (QQTVESKPNE…GRCDHQIKIR (408 aa)). The region spanning 988–1062 (APITQPEQLL…MMAGQMVPLQ (75 aa)) is the Carrier 1 domain. S1023 is subject to O-(pantetheine 4'-phosphoryl)serine. 2 condensation regions span residues 1081 to 1499 (WFEE…KIQQ) and 1539 to 1961 (DVLP…EWDL). The interval 1992–2394 (QQQRSPHQLA…GRSDDQIKIR (403 aa)) is adenylation 2. A Carrier 2 domain is found at 2503-2578 (NAHPGLETQL…KLASLLLDDD (76 aa)). S2538 bears the O-(pantetheine 4'-phosphoryl)serine mark. Positions 2601-2821 (ALFCVNSASG…APENVRQIGE (221 aa)) are thioesterase.

This sequence belongs to the NRP synthetase family. Requires pantetheine 4'-phosphate as cofactor.

It catalyses the reaction holo-[peptidyl-carrier protein] + L-arginine + ATP = L-arginyl-[peptidyl-carrier protein] + AMP + diphosphate. The catalysed reaction is holo-[peptidyl-carrier protein] + L-serine + ATP = L-seryl-[peptidyl-carrier protein] + AMP + diphosphate. Its pathway is siderophore biosynthesis. Its function is as follows. Involved in the synthesis of the siderophore vanchrobactin. Probably adenylates L-arginine via its first adenylation domain and loads it onto its first peptidyl carrier domain via a thioester linkage to the phosphopanthetheine moiety. In addition, may adenylate L-serine via its second adenylation domain and loads it onto its second peptidyl carrier domain via a thioester linkage to the phosphopanthetheine moiety. The thioesterase domain may release vanchrobactin after condensation of the siderophore components. The chain is Vanchrobactin synthetase VabF from Vibrio anguillarum (Listonella anguillarum).